The sequence spans 266 residues: 3-deoxy-manno-octulosonate cytidylyltransferase 1 (266 aa).

It belongs to the KdsB family.

Its subcellular location is the cytoplasm. It carries out the reaction 3-deoxy-alpha-D-manno-oct-2-ulosonate + CTP = CMP-3-deoxy-beta-D-manno-octulosonate + diphosphate. The protein operates within nucleotide-sugar biosynthesis; CMP-3-deoxy-D-manno-octulosonate biosynthesis; CMP-3-deoxy-D-manno-octulosonate from 3-deoxy-D-manno-octulosonate and CTP: step 1/1. Its pathway is bacterial outer membrane biogenesis; lipopolysaccharide biosynthesis. Activates KDO (a required 8-carbon sugar) for incorporation into bacterial lipopolysaccharide in Gram-negative bacteria. In Paraburkholderia phytofirmans (strain DSM 17436 / LMG 22146 / PsJN) (Burkholderia phytofirmans), this protein is 3-deoxy-manno-octulosonate cytidylyltransferase 1.